The sequence spans 600 residues: MVNNMTDLTAQEPAWQTRDHLDDPVIGELRNRFGPDAFTVQATRTGVPVVWIKREQLLEVGDFLKKLPKPYVMLFDLHGMDERLRTHREGLPAADFSVFYHLISIDRNRDIMLKVALAENDLHVPTFTKLFPNANWYERETWDLFGITFDGHPNLRRIMMPQTWKGHPLRKDYPARATEFSPFELTKAKQDLEMEALTFKPEEWGMKRGTENEDFMFLNLGPNHPSAHGAFRIVLQLDGEEIVDCVPDIGYHHRGAEKMGERQSWHSYIPYTDRIEYLGGCVNEMPYVLAVEKLAGITVPDRVNVIRVMLSELFRINSHLLYISTFIQDVGAMTPVFFAFTDRQKIYDLVEAITGFRMHPAWFRIGGVAHDLPRGWDRLLREFLDWMPKRLASYEKAALQNTILKGRSQGVAAYGAKEALEWGTTGAGLRATGIDFDVRKARPYSGYENFDFEIPVGGGVSDCYTRVMLKVEELRQSLRILEQCLNNMPEGPFKADHPLTTPPPKERTLQHIETLITHFLQVSWGPVMPANESFQMIEATKGINSYYLTSDGSTMSYRTRVRTPSFAHLQQIPAAIRGSLVSDLIVYLGSIDFVMSDVDR.

The tract at residues 1-190 is NADH dehydrogenase I subunit C; that stretch reads MVNNMTDLTA…SPFELTKAKQ (190 aa). The interval 214 to 600 is NADH dehydrogenase I subunit D; it reads DFMFLNLGPN…IDFVMSDVDR (387 aa).

It in the N-terminal section; belongs to the complex I 30 kDa subunit family. In the C-terminal section; belongs to the complex I 49 kDa subunit family. In terms of assembly, NDH-1 is composed of 13 different subunits. Subunits NuoB, CD, E, F, and G constitute the peripheral sector of the complex.

It is found in the cell inner membrane. It carries out the reaction a quinone + NADH + 5 H(+)(in) = a quinol + NAD(+) + 4 H(+)(out). In terms of biological role, NDH-1 shuttles electrons from NADH, via FMN and iron-sulfur (Fe-S) centers, to quinones in the respiratory chain. The immediate electron acceptor for the enzyme in this species is believed to be ubiquinone. Couples the redox reaction to proton translocation (for every two electrons transferred, four hydrogen ions are translocated across the cytoplasmic membrane), and thus conserves the redox energy in a proton gradient. The chain is NADH-quinone oxidoreductase subunit C/D from Escherichia coli (strain K12 / DH10B).